The following is a 317-amino-acid chain: Porphobilinogen deaminase (317 aa).

An S-(dipyrrolylmethanemethyl)cysteine modification is found at C245.

This sequence belongs to the HMBS family. As to quaternary structure, monomer. Requires dipyrromethane as cofactor.

The catalysed reaction is 4 porphobilinogen + H2O = hydroxymethylbilane + 4 NH4(+). The protein operates within porphyrin-containing compound metabolism; protoporphyrin-IX biosynthesis; coproporphyrinogen-III from 5-aminolevulinate: step 2/4. It participates in porphyrin-containing compound metabolism; chlorophyll biosynthesis. Tetrapolymerization of the monopyrrole PBG into the hydroxymethylbilane pre-uroporphyrinogen in several discrete steps. The chain is Porphobilinogen deaminase from Synechococcus sp. (strain RCC307).